A 262-amino-acid polypeptide reads, in one-letter code: Purine nucleoside phosphorylase SSP1584 (262 aa).

Zn(2+)-binding residues include His79, Cys124, and His141.

This sequence belongs to the purine nucleoside phosphorylase YfiH/LACC1 family. In terms of assembly, homodimer. It depends on Cu(2+) as a cofactor. Requires Zn(2+) as cofactor.

The catalysed reaction is adenosine + phosphate = alpha-D-ribose 1-phosphate + adenine. The enzyme catalyses S-methyl-5'-thioadenosine + phosphate = 5-(methylsulfanyl)-alpha-D-ribose 1-phosphate + adenine. It carries out the reaction inosine + phosphate = alpha-D-ribose 1-phosphate + hypoxanthine. It catalyses the reaction adenosine + H2O + H(+) = inosine + NH4(+). Purine nucleoside enzyme that catalyzes the phosphorolysis of adenosine and inosine nucleosides, yielding D-ribose 1-phosphate and the respective free bases, adenine and hypoxanthine. Also catalyzes the phosphorolysis of S-methyl-5'-thioadenosine into adenine and S-methyl-5-thio-alpha-D-ribose 1-phosphate. Also has adenosine deaminase activity. This chain is Purine nucleoside phosphorylase SSP1584, found in Staphylococcus saprophyticus subsp. saprophyticus (strain ATCC 15305 / DSM 20229 / NCIMB 8711 / NCTC 7292 / S-41).